A 350-amino-acid chain; its full sequence is Alcohol dehydrogenase 1 (350 aa).

Residues Cys-46, His-69, Cys-100, Cys-103, Cys-106, Cys-114, and Cys-156 each contribute to the Zn(2+) site. Residues 180–186 (GAAGGLG), Asp-204, Lys-209, 271–273 (VGL), and Arg-343 contribute to the NAD(+) site.

The protein belongs to the zinc-containing alcohol dehydrogenase family. As to quaternary structure, homotetramer. Zn(2+) is required as a cofactor.

Its subcellular location is the cytoplasm. It catalyses the reaction a primary alcohol + NAD(+) = an aldehyde + NADH + H(+). The catalysed reaction is a secondary alcohol + NAD(+) = a ketone + NADH + H(+). The sequence is that of Alcohol dehydrogenase 1 (ADH1) from Kluyveromyces lactis (strain ATCC 8585 / CBS 2359 / DSM 70799 / NBRC 1267 / NRRL Y-1140 / WM37) (Yeast).